We begin with the raw amino-acid sequence, 664 residues long: UvrABC system protein B (664 aa).

Residues 25-412 form the Helicase ATP-binding domain; sequence KGLVSGLTDQ…LQVVEQLVRP (388 aa). 38–45 serves as a coordination point for ATP; that stretch reads GVTGSGKT. Residues 91–114 carry the Beta-hairpin motif; sequence YYDYYQPEAYVPQKDMYIEKDSDI. Residues 428–594 form the Helicase C-terminal domain; sequence QIDDLLEEVK…GIRKAIKDIN (167 aa). Residues 620-655 enclose the UVR domain; the sequence is ARLIKELESQMKKAAKNLEFERAALIRDRVVELRAA.

It belongs to the UvrB family. As to quaternary structure, forms a heterotetramer with UvrA during the search for lesions. Interacts with UvrC in an incision complex.

It localises to the cytoplasm. Functionally, the UvrABC repair system catalyzes the recognition and processing of DNA lesions. A damage recognition complex composed of 2 UvrA and 2 UvrB subunits scans DNA for abnormalities. Upon binding of the UvrA(2)B(2) complex to a putative damaged site, the DNA wraps around one UvrB monomer. DNA wrap is dependent on ATP binding by UvrB and probably causes local melting of the DNA helix, facilitating insertion of UvrB beta-hairpin between the DNA strands. Then UvrB probes one DNA strand for the presence of a lesion. If a lesion is found the UvrA subunits dissociate and the UvrB-DNA preincision complex is formed. This complex is subsequently bound by UvrC and the second UvrB is released. If no lesion is found, the DNA wraps around the other UvrB subunit that will check the other stand for damage. The protein is UvrABC system protein B of Dehalococcoides mccartyi (strain CBDB1).